A 188-amino-acid polypeptide reads, in one-letter code: Peptidyl-tRNA hydrolase (188 aa).

F15 is a binding site for tRNA. Residue H20 is the Proton acceptor of the active site. TRNA contacts are provided by Y64, N66, and N112.

It belongs to the PTH family. In terms of assembly, monomer.

Its subcellular location is the cytoplasm. It carries out the reaction an N-acyl-L-alpha-aminoacyl-tRNA + H2O = an N-acyl-L-amino acid + a tRNA + H(+). Its function is as follows. Hydrolyzes ribosome-free peptidyl-tRNAs (with 1 or more amino acids incorporated), which drop off the ribosome during protein synthesis, or as a result of ribosome stalling. In terms of biological role, catalyzes the release of premature peptidyl moieties from peptidyl-tRNA molecules trapped in stalled 50S ribosomal subunits, and thus maintains levels of free tRNAs and 50S ribosomes. In Borrelia duttonii (strain Ly), this protein is Peptidyl-tRNA hydrolase.